We begin with the raw amino-acid sequence, 67 residues long: ARDGYISQPENCVYHCFPGSSGCDTLCKEKGGTGGHCGYKEGRGLACWCLELPDNVGIIVDGIKCHT.

In terms of domain architecture, LCN-type CS-alpha/beta spans 2 to 66 (RDGYISQPEN…GIIVDGIKCH (65 aa)). 4 disulfide bridges follow: Cys-12/Cys-65, Cys-16/Cys-37, Cys-23/Cys-47, and Cys-27/Cys-49. Threonine amide is present on Thr-67.

Belongs to the long (4 C-C) scorpion toxin superfamily. Sodium channel inhibitor family. Alpha subfamily. Expressed by the venom gland.

It is found in the secreted. Functionally, alpha toxins bind voltage-independently at site-3 of sodium channels (Nav) and inhibit the inactivation of the activated channels, thereby blocking neuronal transmission. Is highly toxic to insects (tested on the crickets A.domesticus). This peptide may also be toxic to mammals, since it is similar to alpha-like toxins that are active on both insect and mammalian sodium channels. This Buthacus leptochelys (Egyptian fat-tailed scorpion) protein is Toxin Bl-1.